We begin with the raw amino-acid sequence, 155 residues long: Ribosomal RNA large subunit methyltransferase H (155 aa).

Residues leucine 72, glycine 103, and 122-127 each bind S-adenosyl-L-methionine; that span reads LSPLTL.

Belongs to the RNA methyltransferase RlmH family. Homodimer.

The protein resides in the cytoplasm. It carries out the reaction pseudouridine(1915) in 23S rRNA + S-adenosyl-L-methionine = N(3)-methylpseudouridine(1915) in 23S rRNA + S-adenosyl-L-homocysteine + H(+). Functionally, specifically methylates the pseudouridine at position 1915 (m3Psi1915) in 23S rRNA. The protein is Ribosomal RNA large subunit methyltransferase H of Haemophilus influenzae (strain PittEE).